Here is a 310-residue protein sequence, read N- to C-terminus: HTH-type transcriptional activator TtdR (310 aa).

Positions 6–63 (PLAKDLQVLVEIVHSGSFSAAAATLGQTPAFVTKRIQILENTLATTLLNRSARGVALT) constitute an HTH lysR-type domain. Positions 23–42 (FSAAAATLGQTPAFVTKRIQ) form a DNA-binding region, H-T-H motif.

This sequence belongs to the LysR transcriptional regulatory family.

Positive regulator required for L-tartrate-dependent anaerobic growth on glycerol. Induces expression of the ttdA-ttdB-ygjE operon. In Escherichia coli O6:H1 (strain CFT073 / ATCC 700928 / UPEC), this protein is HTH-type transcriptional activator TtdR (ttdR).